A 798-amino-acid chain; its full sequence is Integrin beta-1 (798 aa).

Residues 1-20 (MNLQLIFWIGLISSVCCVFG) form the signal peptide. Residues 21–728 (QADEDRCLKA…ETPECPTGPD (708 aa)) are Extracellular-facing. One can recognise a PSI domain in the interval 26–76 (RCLKANAKSCGECIQAGPNCGWCTNSTFLQEGMPTSARCDDLEALKKKGCH). 28 disulfide bridges follow: C27/C45, C35/C464, C38/C64, C48/C75, C207/C213, C261/C301, C401/C415, C435/C462, C466/C486, C477/C489, C491/C500, C502/C533, C516/C531, C525/C536, C538/C553, C555/C576, C560/C574, C568/C579, C581/C590, C592/C615, C599/C613, C607/C618, C620/C630, C633/C636, C640/C691, C646/C665, C649/C661, and C699/C723. Positions 75-91 (CHPNDTENPRGSKDIKK) are enriched in basic and acidic residues. The segment at 75–105 (CHPNDTENPRGSKDIKKNKNVTNRSKGTAEK) is disordered. Residues N94 and N97 are each glycosylated (N-linked (GlcNAc...) asparagine). Positions 140 to 378 (DYPIDLYYLM…QLIIDAYNSL (239 aa)) constitute a VWFA domain. Mg(2+)-binding residues include S152 and S154. Ca(2+) is bound by residues S154, D157, D158, and E189. A CX3CL1-binding region spans residues 207–213 (CTNEQNC). N212 is a glycosylation site (N-linked (GlcNAc...) asparagine). Ca(2+) is bound by residues N244, D246, P248, and E249. E249 contributes to the Mg(2+) binding site. N269 is a glycosylation site (N-linked (GlcNAc...) asparagine). Residues 295-314 (LPNDGQCHLKNDVYTMSHYY) form a CX3CL1-binding region. A362 is a Ca(2+) binding site. Residues 383-465 (ILENSKLPEG…IILQFICECE (83 aa)) form an interaction with TMEM182 region. 2 N-linked (GlcNAc...) asparagine glycosylation sites follow: N406 and N417. 4 I-EGF domains span residues 466–501 (CQGE…RHCE), 502–554 (CSTD…KFCE), 555–591 (CDNF…SACD), and 592–631 (CSLD…PTCE). N-linked (GlcNAc...) asparagine glycosylation is present at N481. A glycan (N-linked (GlcNAc...) asparagine) is linked at N520. N-linked (GlcNAc...) asparagine glycosylation is present at N584. The N-linked (GlcNAc...) asparagine glycan is linked to N669. The helical transmembrane segment at 729–749 (IIPIVAGVVAGIVLIGLALLL) threads the bilayer. Topologically, residues 750-798 (IWKLLMIIHDRREFAKFEKERMNAKWDTGENPIYKSAVTTVVNPKYEGK) are cytoplasmic. The interval 762 to 767 (EFAKFE) is signal for sorting from recycling endosomes; interaction with ACAP1. T777 is modified (phosphothreonine). A Phosphotyrosine modification is found at Y783. At S785 the chain carries Phosphoserine. Positions 785 to 792 (SAVTTVVN) are interaction with ITGB1BP1. T789 is modified (phosphothreonine). K794 is modified (N6-acetyllysine; alternate). Residue K794 forms a Glycyl lysine isopeptide (Lys-Gly) (interchain with G-Cter in SUMO1); alternate linkage.

This sequence belongs to the integrin beta chain family. As to quaternary structure, interacts with seprase FAP (seprase); the interaction occurs at the cell surface of invadopodia membrane in a collagen-dependent manner. Heterodimer of an alpha and a beta subunit. Beta-1 associates with either alpha-1, alpha-2, alpha-3, alpha-4, alpha-5, alpha-6, alpha-7, alpha-8, alpha-9, alpha-10, alpha-11 or alpha-V. ITGA6:ITGB1 is found in a complex with CD9; interaction takes place in oocytes and is involved in sperm-egg fusion. Binds LGALS3BP and NMRK2, when associated with alpha-7, but not with alpha-5. Interacts with FLNA, FLNB, FLNC and RANBP9. Interacts with KRT1 in the presence of RACK1 and SRC. Interacts with JAML; integrin alpha-4/beta-1 may regulate leukocyte to endothelial cells adhesion by controlling JAML homodimerization. Interacts with RAB21. Interacts (via the cytoplasmic region) with RAB25 (via the hypervariable C-terminal region). Interacts with MYO10. Interacts with ITGB1BP1 (via C-terminal region); the interaction is a prerequisite for focal adhesion disassembly. Interacts with TLN1; the interaction is prevented by competitive binding of ITGB1BP1. Interacts with ACAP1; required for ITGB1 recycling. Interacts with ASAP3. Interacts with FERMT2; the interaction is inhibited in presence of ITGB1BP1. Interacts with DAB2. Interacts with FGR and HCK. Interacts with alpha-7A and alpha-7B in adult skeletal muscle. Interacts with alpha-7B in cardiomyocytes of adult heart. Interacts with EMP2; the interaction may be direct or indirect and ITGB1 has a heterodimer form. ITGA5:ITGB1 interacts with CCN3. ITGA4:ITGB1 is found in a ternary complex with CX3CR1 and CX3CL1. ITGA5:ITGB1 interacts with FBN1. ITGA5:ITGB1 acts as a receptor for fibronectin FN1 and mediates R-G-D-dependent cell adhesion to FN1. ITGA5:ITGB1 interacts with IL1B. Interacts with MDK. ITGA4:ITGB1 interacts with MDK; this interaction mediates MDK-induced osteoblast cells migration through PXN phosphorylation. ITGA6:ITGB1 interacts with MDK; this interaction mediates MDK-induced neurite-outgrowth. ITGA5:ITGB1 interacts with ACE2. Interacts with TMEM182 and LAMB1. Interacts with tensin TNS3; TNS3 also interacts with PEAK1, thus acting as an adapter molecule to bridge the association of PEAK1 with ITGB1. Interacts with tensin TNS4; the interaction displaces tensin TNS3 from the ITGB1 cytoplasmic tail and promotes ITGB1 stability. Integrin ITGA9:ITGB1 interacts with SPP1/OPN (via N-terminus). Integrin ITGA9:ITGB1 interacts with TNC/TNFN3 (via the 3rd Fibronectin type-III domain). Integrins ITGA4:ITGB1 and ITGA9:ITGB1 interact with SVEP1 (via Sushi domain 21); thereby inhibit Ca(2+) intracellular signaling and as a result repress vasocontraction. ITGA4:ITGB1 and ITGA5:ITGB1 interacts with SELP. Interacts with CD248. ITGA5:ITGB1 interacts with IGFBP1. ITGA4:ITGB1 interacts with BCAM. Interacts with ADGRG6.

The protein resides in the cell membrane. Its subcellular location is the cell projection. It localises to the invadopodium membrane. It is found in the ruffle membrane. The protein localises to the recycling endosome. The protein resides in the melanosome. Its subcellular location is the cell junction. It localises to the focal adhesion. It is found in the lamellipodium. The protein localises to the ruffle. Its function is as follows. Integrins alpha-1/beta-1, alpha-2/beta-1, alpha-10/beta-1 and alpha-11/beta-1 are receptors for collagen. Integrins alpha-1/beta-1 and alpha-2/beta-2 recognize the proline-hydroxylated sequence G-F-P-G-E-R in collagen. Integrins alpha-2/beta-1, alpha-3/beta-1, alpha-4/beta-1, alpha-5/beta-1, alpha-8/beta-1, alpha-10/beta-1, alpha-11/beta-1 and alpha-V/beta-1 are receptors for fibronectin. Alpha-4/beta-1 recognizes one or more domains within the alternatively spliced CS-1 and CS-5 regions of fibronectin. Integrin alpha-5/beta-1 is a receptor for fibrinogen. Integrin alpha-1/beta-1, alpha-2/beta-1, alpha-6/beta-1 and alpha-7/beta-1 are receptors for lamimin. Integrin alpha-6/beta-1 (ITGA6:ITGB1) is present in oocytes and is involved in sperm-egg fusion. Integrin alpha-4/beta-1 is a receptor for VCAM1 and recognizes the sequence Q-I-D-S in VCAM1. Integrin alpha-9/beta-1 is a receptor for VCAM1, cytotactin and osteopontin. It recognizes the sequence A-E-I-D-G-I-E-L in cytotactin. Integrin alpha-3/beta-1 is a receptor for epiligrin, thrombospondin and CSPG4. Integrin alpha-3/beta-1 provides a docking site for FAP (seprase) at invadopodia plasma membranes in a collagen-dependent manner and hence may participate in the adhesion, formation of invadopodia and matrix degradation processes, promoting cell invasion. Alpha-3/beta-1 may mediate with LGALS3 the stimulation by CSPG4 of endothelial cells migration. Integrin alpha-V/beta-1 is a receptor for vitronectin. Beta-1 integrins recognize the sequence R-G-D in a wide array of ligands. When associated with alpha-7/beta-1 integrin, regulates cell adhesion and laminin matrix deposition. Involved in promoting endothelial cell motility and angiogenesis. Involved in osteoblast compaction through the fibronectin fibrillogenesis cell-mediated matrix assembly process and the formation of mineralized bone nodules. May be involved in up-regulation of the activity of kinases such as PKC via binding to KRT1. Together with KRT1 and RACK1, serves as a platform for SRC activation or inactivation. Plays a mechanistic adhesive role during telophase, required for the successful completion of cytokinesis. ITGA4:ITGB1 binds to fractalkine (CX3CL1) and may act as its coreceptor in CX3CR1-dependent fractalkine signaling. ITGA4:ITGB1 and ITGA5:ITGB1 bind to PLA2G2A via a site (site 2) which is distinct from the classical ligand-binding site (site 1) and this induces integrin conformational changes and enhanced ligand binding to site 1. ITGA5:ITGB1 acts as a receptor for fibrillin-1 (FBN1) and mediates R-G-D-dependent cell adhesion to FBN1. ITGA5:ITGB1 is a receptor for IL1B and binding is essential for IL1B signaling. ITGA5:ITGB3 is a receptor for soluble CD40LG and is required for CD40/CD40LG signaling. Plays an important role in myoblast differentiation and fusion during skeletal myogenesis. ITGA9:ITGB1 may play a crucial role in SVEP1/polydom-mediated myoblast cell adhesion. Integrins ITGA9:ITGB1 and ITGA4:ITGB1 repress PRKCA-mediated L-type voltage-gated channel Ca(2+) influx and ROCK-mediated calcium sensitivity in vascular smooth muscle cells via their interaction with SVEP1, thereby inhibit vasocontraction. In Camelus bactrianus (Bactrian camel), this protein is Integrin beta-1.